The sequence spans 226 residues: Thiocyanate methyltransferase 1 (226 aa).

Residues W35, W39, W46, and G73 each coordinate S-adenosyl-L-methionine. A Phosphoserine modification is found at S85. Residues D94, 122-123, and Y138 contribute to the S-adenosyl-L-methionine site; that span reads DF.

It belongs to the class I-like SAM-binding methyltransferase superfamily. TPMT family. As to expression, ubiquitous.

It catalyses the reaction thiocyanate + S-adenosyl-L-methionine = methyl thiocyanate + S-adenosyl-L-homocysteine. Its function is as follows. S-adenosyl-L-methionine-dependent methyltransferase. Probably involved in glucosinolate metabolism and defense against phytopathogens. Highly reactive to thiocyanate (NCS(-)) derived from myrosinase-mediated hydrolysis of glucosinolates upon tissue damage. Also accepts halid ions as substrates with a lower affinity. The sequence is that of Thiocyanate methyltransferase 1 (TMT1) from Brassica oleracea (Wild cabbage).